The primary structure comprises 119 residues: Chorion class CA protein ERA.3 (119 aa).

Positions 1 to 21 (MSYFVVFAICIQACLFHNVYS) are cleaved as a signal peptide. The segment at 22 to 55 (QCLGRVGPGGPPLGPYGGPLGGPGYGPVGYGGCG) is left arm. The central domain stretch occupies residues 56-103 (GYGGSGIGNVAVAGELPVVGSSAVMGQVPVIGAVEFAGPACAVGSVSI). The segment at 104–119 (SGACGPTCGCGGLPYY) is right arm.

It belongs to the chorion protein family.

This protein is one of many from the eggshell of the silk moth. The protein is Chorion class CA protein ERA.3 (ERA.3) of Bombyx mori (Silk moth).